Consider the following 347-residue polypeptide: UDP-3-O-acylglucosamine N-acyltransferase (347 aa).

Residue His240 is the Proton acceptor of the active site.

Belongs to the transferase hexapeptide repeat family. LpxD subfamily. As to quaternary structure, homotrimer.

It catalyses the reaction a UDP-3-O-[(3R)-3-hydroxyacyl]-alpha-D-glucosamine + a (3R)-hydroxyacyl-[ACP] = a UDP-2-N,3-O-bis[(3R)-3-hydroxyacyl]-alpha-D-glucosamine + holo-[ACP] + H(+). It participates in bacterial outer membrane biogenesis; LPS lipid A biosynthesis. Catalyzes the N-acylation of UDP-3-O-acylglucosamine using 3-hydroxyacyl-ACP as the acyl donor. Is involved in the biosynthesis of lipid A, a phosphorylated glycolipid that anchors the lipopolysaccharide to the outer membrane of the cell. In Hydrogenovibrio crunogenus (strain DSM 25203 / XCL-2) (Thiomicrospira crunogena), this protein is UDP-3-O-acylglucosamine N-acyltransferase.